The primary structure comprises 248 residues: Probable transcriptional regulatory protein Nham_3525 (248 aa).

Residues 1–21 (MAGHSQFKNIMHRKGRQDAQK) form a disordered region.

It belongs to the TACO1 family.

It is found in the cytoplasm. The polypeptide is Probable transcriptional regulatory protein Nham_3525 (Nitrobacter hamburgensis (strain DSM 10229 / NCIMB 13809 / X14)).